The following is a 60-amino-acid chain: Ras-related protein Rab-2A (60 aa).

Residues Ser1, Cys2, and Thr19 each contribute to the GTP site. Ser1 is a Mg(2+) binding site. The Effector region motif lies at 16-24; sequence HDLTIGVEF. Thr19 provides a ligand contact to Mg(2+).

The protein belongs to the small GTPase superfamily. Rab family. Interacts with PRKCI. Interacts with TRIP11. Interacts (in GTP-bound form) with GARIN1B. Interacts (GTP-bound) with HOPS complex component VPS39; interaction contributes to obtaining a functional HOPS complex that promotes autophagosome-lysosome membrane fusion driven by STX17-SNAP29-VAMP8. May interact with VPS41. Mg(2+) serves as cofactor. Prenylated. Prenylation is required for association with cellular membranes.

It is found in the endoplasmic reticulum-Golgi intermediate compartment membrane. The protein resides in the melanosome. It localises to the endoplasmic reticulum membrane. The protein localises to the golgi apparatus membrane. Its subcellular location is the cytoplasmic vesicle. It is found in the secretory vesicle. The protein resides in the acrosome. It localises to the autophagosome membrane. It catalyses the reaction GTP + H2O = GDP + phosphate + H(+). With respect to regulation, regulated by guanine nucleotide exchange factors (GEFs) which promote the exchange of bound GDP for free GTP, GTPase activating proteins (GAPs) which increase the GTP hydrolysis activity, and GDP dissociation inhibitors (GDIs) which inhibit the dissociation of the nucleotide from the GTPase. The small GTPases Rab are key regulators of intracellular membrane trafficking, from the formation of transport vesicles to their fusion with membranes. Rabs cycle between active GTP-bound and inactive GDP-bound states. In their active state, drive transport of vesicular carriers from donor organelles to acceptor organelles to regulate the membrane traffic that maintains organelle identity and morphology. RAB2A regulates autophagy by promoting autophagosome-lysosome fusion via recruitment of the HOPS endosomal tethering complex; this process involves autophagosomal RAB2A and lysosomal RAB39A recruitment of HOPS subcomplexes VPS39-VPS11 and VPS41-VPS16-VPS18-VPS33A, respectively, which assemble into a functional complex to mediate membrane tethering and SNAREs-driven membrane fusion. Required for protein transport from the endoplasmic reticulum to the Golgi complex. Regulates the compacted morphology of the Golgi. Together with RAB2B, redundantly required for efficient autophagic flux. In Mesocricetus auratus (Golden hamster), this protein is Ras-related protein Rab-2A.